An 85-amino-acid chain; its full sequence is Conotoxin MaIr94 (85 aa).

The N-terminal stretch at 1 to 22 is a signal peptide; it reads MKLTCVLIITVLFLTACQLTAA. A propeptide spanning residues 23-49 is cleaved from the precursor; sequence GNSRDKQEDPVVRSSGEVQRSEDIKLA. Disulfide bonds link Cys-52–Cys-69, Cys-59–Cys-73, and Cys-68–Cys-84.

It belongs to the conotoxin O1 superfamily. Expressed by the venom duct.

The protein localises to the secreted. Functionally, produces no obvious effect on ionic currents when tested on the mouse dorsal rooted ganglia (DRG). The polypeptide is Conotoxin MaIr94 (Conus marmoreus (Marble cone)).